We begin with the raw amino-acid sequence, 333 residues long: Squamosa promoter-binding-like protein 8 (333 aa).

Positions 1–28 are disordered; the sequence is MLDYEWDNPSSIVLSGDERNPDSDPTRS. Positions 16-25 are enriched in basic and acidic residues; it reads GDERNPDSDP. The tract at residues 179–269 is sufficient and necessary for DNA binding; the sequence is MANSLSTPRC…RKCHQSASAT (91 aa). The segment at 185–262 adopts an SBP-type zinc-finger fold; that stretch reads TPRCQAEGCN…ADHNRRRRKC (78 aa). Residues Cys-188, Cys-193, Cys-210, His-213, Cys-229, Cys-232, His-236, and Cys-248 each contribute to the Zn(2+) site. The short motif at 245 to 261 is the Bipartite nuclear localization signal element; the sequence is KRSCRKRLADHNRRRRK. 2 disordered regions span residues 254–303 and 314–333; these read DHNR…TISL and TASS…FSSG. The span at 264–284 shows a compositional bias: polar residues; that stretch reads QSASATQDTGTGKTTPKSPND. The segment covering 289 to 299 has biased composition (low complexity); the sequence is ASSSPSSNAPP.

The cofactor is Zn(2+). Expressed in shoot apical region and early floral tissues. Transcripts levels increase in developing pollen sacs, and decrease in later stage of anther development. Strongly expressed in the placental region of the carpels.

It is found in the nucleus. It localises to the cytoplasm. In terms of biological role, trans-acting factor that binds specifically to the consensus nucleotide sequence 5'-TNCGTACAA-3'. Binds specifically to the 5'-GTAC-3' core sequence. Involved in development and floral organogenesis. Required for ovule differentiation, pollen production, filament elongation, seed formation and siliques elongation. Also seems to play a role in the formation of trichomes on sepals. May positively modulate gibberellin (GA) signaling in flower. In Arabidopsis thaliana (Mouse-ear cress), this protein is Squamosa promoter-binding-like protein 8 (SPL8).